A 202-amino-acid chain; its full sequence is Matrix protein (202 aa).

The disordered stretch occupies residues 9–31 (KNRRDEDTQKSSPASAPLDDDDL). The short motif at 35-38 (PPEY) is the PPXY motif element. The interval 115–151 (KLRRTFIFQWADSRGPLEGEELEYSQEITWDDDTEFV) is essential for glycoprotein binding.

Belongs to the lyssavirus matrix protein family. Homomultimer. Interacts with nucleoprotein and with the cytoplasmic domain of glycoprotein. Interacts with host ATP6V1A; this interaction plays an important role in virion uncoating after viral entry.

It is found in the virion membrane. Its subcellular location is the host endomembrane system. The protein resides in the host cytoplasm. Its function is as follows. Plays a major role in assembly, budding and uncoating of virion after membrane fusion. Completely covers the ribonucleoprotein coil and keep it in condensed bullet-shaped form. Inhibits viral transcription and stimulates replication. Plays a major role in early induction of TRAIL-mediated apoptosis in infected neurons. Inhibits the integrated stress response (ISR) in the infected cell by blocking the formation of stress granules. In Rabies virus (strain SAD B19) (RABV), this protein is Matrix protein (M).